Reading from the N-terminus, the 104-residue chain is Large ribosomal subunit protein bL21 (104 aa).

This sequence belongs to the bacterial ribosomal protein bL21 family. In terms of assembly, part of the 50S ribosomal subunit. Contacts protein L20.

Its function is as follows. This protein binds to 23S rRNA in the presence of protein L20. The protein is Large ribosomal subunit protein bL21 of Nitrosococcus oceani (strain ATCC 19707 / BCRC 17464 / JCM 30415 / NCIMB 11848 / C-107).